A 732-amino-acid chain; its full sequence is Integrator complex subunit 13 (732 aa).

Residues Pro564 to Lys648 show a composition bias toward basic and acidic residues. The segment at Pro564–Pro650 is disordered. The short motif at Lys572 to Asp582 is the Nuclear localization signal (NLS) element. Lys611 participates in a covalent cross-link: Glycyl lysine isopeptide (Lys-Gly) (interchain with G-Cter in SUMO2). Phosphoserine is present on residues Ser623, Ser626, and Ser678. Residues Gly649–Gly694 are cleavage module binding motif (CMBM).

Belongs to the Integrator subunit 13 family. In terms of assembly, component of the Integrator complex, composed of core subunits INTS1, INTS2, INTS3, INTS4, INTS5, INTS6, INTS7, INTS8, INTS9/RC74, INTS10, INTS11/CPSF3L, INTS12, INTS13, INTS14 and INTS15. The core complex associates with protein phosphatase 2A subunits PPP2CA and PPP2R1A, to form the Integrator-PP2A (INTAC) complex. INTS13 is part of the tail subcomplex, composed of INTS10, INTS13, INTS14 and INTS15. Interacts with transcription factors ZNF609 and ZNF655. Interacts with PAFAH1B1; this interaction may be required for proper recruitment of dynein complexes to the nuclear envelope at prophase.

The protein resides in the nucleus. Its subcellular location is the cytoplasm. Its function is as follows. Component of the integrator complex, a multiprotein complex that terminates RNA polymerase II (Pol II) transcription in the promoter-proximal region of genes. The integrator complex provides a quality checkpoint during transcription elongation by driving premature transcription termination of transcripts that are unfavorably configured for transcriptional elongation: the complex terminates transcription by (1) catalyzing dephosphorylation of the C-terminal domain (CTD) of Pol II subunit POLR2A/RPB1 and SUPT5H/SPT5, (2) degrading the exiting nascent RNA transcript via endonuclease activity and (3) promoting the release of Pol II from bound DNA. The integrator complex is also involved in terminating the synthesis of non-coding Pol II transcripts, such as enhancer RNAs (eRNAs), small nuclear RNAs (snRNAs), telomerase RNAs and long non-coding RNAs (lncRNAs). Within the integrator complex, INTS13 is part of the integrator tail module and acts as a platform for the recruitment of transcription factors at promoters. At prophase, mediates recruitment of cytoplasmic dynein to the nuclear envelope, a step important for proper centrosome-nucleus coupling. At G2/M phase, may be required for proper spindle formation and execution of cytokinesis. In Mus musculus (Mouse), this protein is Integrator complex subunit 13.